Here is a 698-residue protein sequence, read N- to C-terminus: Inner centromere protein SLI15 (698 aa).

The residue at position 268 (S268) is a Phosphoserine. Disordered stretches follow at residues K365–T390, E405–N444, and R455–T474. Polar residues-rich tracts occupy residues R422 to S439 and A459 to T474. Residue S489 is modified to Phosphoserine. The interval I535–L560 is disordered. Residues Q550 to L560 are compositionally biased toward basic and acidic residues.

The protein belongs to the INCENP family. As to quaternary structure, component of the CPC complex at least composed of IPL1, BIR1 and SLI15. In terms of processing, phosphorylated by serine/threonine protein kinase IPL1.

It localises to the nucleus. The protein resides in the cytoplasm. The protein localises to the cytoskeleton. It is found in the spindle. Its subcellular location is the chromosome. It localises to the centromere. The protein resides in the kinetochore. In terms of biological role, component of the chromosomal passenger complex (CPC), a complex that acts as a key regulator of mitosis. Stimulates IPL1 kinase activity and facilitates its association with the mitotic spindle. Has a role in attaching the kinetochores to the microtubules and ensuring that sister kinetochores connect to opposite poles. The polypeptide is Inner centromere protein SLI15 (SLI15) (Saccharomyces cerevisiae (strain ATCC 204508 / S288c) (Baker's yeast)).